The primary structure comprises 1184 residues: DNA-directed RNA polymerase subunit beta (1184 aa).

The tract at residues 1160 to 1184 (DDDFTNQNDAFNIVQPENAATEKTE) is disordered.

This sequence belongs to the RNA polymerase beta chain family. As to quaternary structure, the RNAP catalytic core consists of 2 alpha, 1 beta, 1 beta' and 1 omega subunit. When a sigma factor is associated with the core the holoenzyme is formed, which can initiate transcription.

The catalysed reaction is RNA(n) + a ribonucleoside 5'-triphosphate = RNA(n+1) + diphosphate. Its function is as follows. DNA-dependent RNA polymerase catalyzes the transcription of DNA into RNA using the four ribonucleoside triphosphates as substrates. The chain is DNA-directed RNA polymerase subunit beta from Listeria innocua serovar 6a (strain ATCC BAA-680 / CLIP 11262).